Here is a 610-residue protein sequence, read N- to C-terminus: Elongation factor 4 (610 aa).

A tr-type G domain is found at 15 to 197 (KSIRNFSIIA…RIINDIPYPK (183 aa)). GTP contacts are provided by residues 27–32 (DHGKST) and 144–147 (NKID).

The protein belongs to the TRAFAC class translation factor GTPase superfamily. Classic translation factor GTPase family. LepA subfamily.

Its subcellular location is the cell membrane. The catalysed reaction is GTP + H2O = GDP + phosphate + H(+). Its function is as follows. Required for accurate and efficient protein synthesis under certain stress conditions. May act as a fidelity factor of the translation reaction, by catalyzing a one-codon backward translocation of tRNAs on improperly translocated ribosomes. Back-translocation proceeds from a post-translocation (POST) complex to a pre-translocation (PRE) complex, thus giving elongation factor G a second chance to translocate the tRNAs correctly. Binds to ribosomes in a GTP-dependent manner. In Buchnera aphidicola subsp. Acyrthosiphon pisum (strain APS) (Acyrthosiphon pisum symbiotic bacterium), this protein is Elongation factor 4.